We begin with the raw amino-acid sequence, 257 residues long: Flagellar brake protein YcgR 1 (257 aa).

A compositionally biased stretch (polar residues) spans 1-18; the sequence is MDTTQSNGQTDTQGQLHA. Residues 1-30 are disordered; that stretch reads MDTTQSNGQTDTQGQLHAQTAEGGNDFGRR. The PilZ domain occupies 133–246; the sequence is QRREYFRVDA…AENTLQRLIT (114 aa).

Belongs to the YcgR family. As to quaternary structure, monomer. Interacts with the flagellar basal bodies.

It is found in the bacterial flagellum basal body. Functionally, acts as a flagellar brake, regulating swimming and swarming in a bis-(3'-5') cyclic diguanylic acid (c-di-GMP)-dependent manner. Binds 1 c-di-GMP dimer per subunit. Increasing levels of c-di-GMP lead to decreased motility. The polypeptide is Flagellar brake protein YcgR 1 (Paraburkholderia phytofirmans (strain DSM 17436 / LMG 22146 / PsJN) (Burkholderia phytofirmans)).